The sequence spans 525 residues: 2-isopropylmalate synthase (525 aa).

The 263-residue stretch at 12-274 (VVIFDTTLRD…WNKIDTTQLT (263 aa)) folds into the Pyruvate carboxyltransferase domain. Positions 21, 209, 211, and 245 each coordinate Mn(2+). The interval 398–525 (KLLSLSVIAG…GHGASAAAAS (128 aa)) is regulatory domain.

Belongs to the alpha-IPM synthase/homocitrate synthase family. LeuA type 1 subfamily. As to quaternary structure, homodimer. Mn(2+) serves as cofactor.

The protein resides in the cytoplasm. It catalyses the reaction 3-methyl-2-oxobutanoate + acetyl-CoA + H2O = (2S)-2-isopropylmalate + CoA + H(+). It participates in amino-acid biosynthesis; L-leucine biosynthesis; L-leucine from 3-methyl-2-oxobutanoate: step 1/4. Functionally, catalyzes the condensation of the acetyl group of acetyl-CoA with 3-methyl-2-oxobutanoate (2-ketoisovalerate) to form 3-carboxy-3-hydroxy-4-methylpentanoate (2-isopropylmalate). This chain is 2-isopropylmalate synthase, found in Bradyrhizobium sp. (strain ORS 278).